A 501-amino-acid polypeptide reads, in one-letter code: UPF0616 protein C1687.04 (501 aa).

Belongs to the UPF0616 family.

It localises to the cytoplasm. The protein localises to the nucleus. The chain is UPF0616 protein C1687.04 from Schizosaccharomyces pombe (strain 972 / ATCC 24843) (Fission yeast).